Consider the following 197-residue polypeptide: Protein GrpE (197 aa).

The tract at residues 1–40 is disordered; sequence MSSKEQKTPEGQAPEEIIMDRHEEIEAVEPEASAEQVDPR.

It belongs to the GrpE family. As to quaternary structure, homodimer.

The protein localises to the cytoplasm. In terms of biological role, participates actively in the response to hyperosmotic and heat shock by preventing the aggregation of stress-denatured proteins, in association with DnaK and GrpE. It is the nucleotide exchange factor for DnaK and may function as a thermosensor. Unfolded proteins bind initially to DnaJ; upon interaction with the DnaJ-bound protein, DnaK hydrolyzes its bound ATP, resulting in the formation of a stable complex. GrpE releases ADP from DnaK; ATP binding to DnaK triggers the release of the substrate protein, thus completing the reaction cycle. Several rounds of ATP-dependent interactions between DnaJ, DnaK and GrpE are required for fully efficient folding. This is Protein GrpE from Shigella flexneri serotype 5b (strain 8401).